A 427-amino-acid polypeptide reads, in one-letter code: MKLKTNIRHLHGSIRVPGDKSISHRSIIFGSLAEGETKVYDILRGEDVLSTMQVFRDLGVEIEDKDGVITIQGVGMAGLKAPQNALNMGNSGTSIRLISGVLAGADFEVEMFGDDSLSKRPMDRVTLPLKKMGVSISGQTERDLPPLRLKGTKNLRPIHYELPIASAQVKSALMFAALQAKGASVIIEKECTRNHTEDMLKQFGGHLSVDSKKITVQGPQKLTGQKVVVPGDISSAAFWLVAGLIVPNSRLVLQNVGINETRTGIIDVIRAMGGKLEITEIDPVAKSSTLTVESSDLKGTEIGGALIPRLIDELPIIALLATQAQGVTVIKDAEELKVKETDRIQVVADALNSMGADITPTADGMIIKGKSALHGARVNTFGDHRIGMMTAIAALLVADGEVELDRAEAINTSYPSFFDDLESLIHG.

3 residues coordinate 3-phosphoshikimate: Lys20, Ser21, and Arg25. Lys20 provides a ligand contact to phosphoenolpyruvate. Gly92 and Arg120 together coordinate phosphoenolpyruvate. 3-phosphoshikimate contacts are provided by Ser166, Gln168, Asp312, and Lys339. Gln168 contributes to the phosphoenolpyruvate binding site. Asp312 acts as the Proton acceptor in catalysis. Arg343 and Arg385 together coordinate phosphoenolpyruvate.

This sequence belongs to the EPSP synthase family. In terms of assembly, monomer.

The protein resides in the cytoplasm. The catalysed reaction is 3-phosphoshikimate + phosphoenolpyruvate = 5-O-(1-carboxyvinyl)-3-phosphoshikimate + phosphate. The protein operates within metabolic intermediate biosynthesis; chorismate biosynthesis; chorismate from D-erythrose 4-phosphate and phosphoenolpyruvate: step 6/7. Functionally, catalyzes the transfer of the enolpyruvyl moiety of phosphoenolpyruvate (PEP) to the 5-hydroxyl of shikimate-3-phosphate (S3P) to produce enolpyruvyl shikimate-3-phosphate and inorganic phosphate. This is 3-phosphoshikimate 1-carboxyvinyltransferase from Streptococcus pneumoniae (strain Hungary19A-6).